A 70-amino-acid polypeptide reads, in one-letter code: DNA-directed RNA polymerase subunit omega (70 aa).

The protein belongs to the RNA polymerase subunit omega family. In terms of assembly, the RNAP catalytic core consists of 2 alpha, 1 beta, 1 beta' and 1 omega subunit. When a sigma factor is associated with the core the holoenzyme is formed, which can initiate transcription.

It catalyses the reaction RNA(n) + a ribonucleoside 5'-triphosphate = RNA(n+1) + diphosphate. Promotes RNA polymerase assembly. Latches the N- and C-terminal regions of the beta' subunit thereby facilitating its interaction with the beta and alpha subunits. This chain is DNA-directed RNA polymerase subunit omega, found in Marinobacter nauticus (strain ATCC 700491 / DSM 11845 / VT8) (Marinobacter aquaeolei).